Reading from the N-terminus, the 1066-residue chain is MPVFHTRTIESILEPVAQQISHLVIMHEEGEVDGKAIPDLTAPVAAVQAAVSNLVRVGKETVQTTEDQILKRDMPPAFIKVENACTKLVQAAQMLQSDPYSVPARDYLIDGSRGILSGTSDLLLTFDEAEVRKIIRVCKGILEYLTVAEVVETMEDLVTYTKNLGPGMTKMAKMIDERQQELTHQEHRVMLVNSMNTVKELLPVLISAMKIFVTTKNSKNQGIEEALKNRNFTVEKMSAEINEIIRVLQLTSWDEDAWASKDTEAMKRALASIDSKLNQAKGWLRDPNASPGDAGEQAIRQILDEAGKVGELCAGKERREILGTCKMLGQMTDQVADLRARGQGASPVAMQKAQQVSQGLDVLTAKVENAARKLEAMTNSKQSIAKKIDAAQNWLADPNGGPEGEEQIRGALAEARKIAELCDDPKERDDILRSLGEIAALTSKLGDLRRQGKGDSPEARALAKQVATALQNLQTKTNRAVANSRPAKAAVHLEGKIEQAQRWIDNPTVDDRGVGQAAIRGLVAEGHRLANVMMGPYRQDLLAKCDRVDQLTAQLADLAARGEGESPQARALASQLQDSLKDLKAQMQEAMTQEVSDVFSDTTTPIKLLAVAATAPPDAPNREEVFDERAANFENHSGRLGATAEKAAAVGTANKSTVEGIQASVKTARELTPQVISAARILLRNPGNQAAYEHFETMKNQWIDNVEKMTGLVDEAIDTKSLLDASEEAIKKDLDKCKVAMANIQPQMLVAGATSIARRANRILLVAKREVENSEDPKFREAVKAASDELSKTISPMVMDAKAVAGNISDPGLQKSFLDSGYRILGAVAKVREAFQPQEPDFPPPPPDLEQLRLTDELAPPKPPLPEGEVPPPRPPPPEEKDEEFPEQKAGEVINQPMMMAARQLHDEARKWSSKGNDIIAAAKRMALLMAEMSRLVRGGSGTKRALIQCAKDIAKASDEVTRLAKEVAKQCTDKRIRTNLLQVCERIPTISTQLKILSTVKATMLGRTNISDEESEQATEMLVHNAQNLMQSVKETVREAEAASIKIRTDAGFTLRWVRKTPWYQ.

The tract at residues 1 to 835 is N-terminal globular head; the sequence is MPVFHTRTIE…GAVAKVREAF (835 aa). Position 97 is a phosphoserine (S97). The talin-interaction stretch occupies residues 168–208; it reads MTKMAKMIDERQQELTHQEHRVMLVNSMNTVKELLPVLISA. An N6-acetyllysine modification is found at K173. Repeat copies occupy residues 259–369, 370–479, and 480–589. Positions 259 to 589 are 3 X 112 AA tandem repeats; the sequence is ASKDTEAMKR…LKDLKAQMQE (331 aa). Residues S260, S272, S275, S290, S346, and S434 each carry the phosphoserine modification. K496 is subject to N6-acetyllysine. Y537 carries the post-translational modification Phosphotyrosine. 3 positions are modified to phosphoserine: S574, S579, and S600. T604 and T672 each carry phosphothreonine. Phosphoserine is present on S721. Positions 741–764 are interaction with ACTN4; it reads MANIQPQMLVAGATSIARRANRIL. A phosphoserine mark is found at S795 and S809. Y822 bears the Phosphotyrosine mark. Positions 836-878 are linker (Pro-rich); the sequence is QPQEPDFPPPPPDLEQLRLTDELAPPKPPLPEGEVPPPRPPPP. The segment at 857–887 is disordered; the sequence is ELAPPKPPLPEGEVPPPRPPPPEEKDEEFPE. Positions 860–876 are enriched in pro residues; sequence PPKPPLPEGEVPPPRPP. The segment at 879 to 1066 is C-terminal tail; the sequence is EEKDEEFPEQ…RWVRKTPWYQ (188 aa). Facilitates phospholipid membrane insertion regions lie at residues 935–978 and 1052–1066; these read RLVR…KRIR and AGFT…PWYQ. The residue at position 1065 (Y1065) is a Phosphotyrosine; by SRC-type Tyr-kinases.

It belongs to the vinculin/alpha-catenin family. In terms of assembly, exhibits self-association properties. Part of a complex composed of THSD1, PTK2/FAK1, TLN1 and VCL. Interacts with APBB1IP, NRAP and TLN1. Interacts with SYNM. Interacts with CTNNB1 and this interaction is necessary for its localization to the cell-cell junctions and for its function in regulating cell surface expression of E-cadherin. Interacts with SORBS1. Interacts with SYNM. Interacts with CTNNA1. Binds to ACTN4; this interaction triggers conformational changes. Interacts with FLII. Post-translationally, phosphorylated; on serines, threonines and tyrosines. Phosphorylation on Tyr-1065 in activated platelets affects head-tail interactions and cell spreading but has no effect on actin binding nor on localization to focal adhesion plaques. Acetylated; mainly by myristic acid but also by a small amount of palmitic acid.

It localises to the cell membrane. The protein localises to the cell junction. Its subcellular location is the adherens junction. The protein resides in the focal adhesion. It is found in the cytoplasm. It localises to the cytoskeleton. The protein localises to the sarcolemma. Its subcellular location is the cell projection. The protein resides in the podosome. Actin filament (F-actin)-binding protein involved in cell-matrix adhesion and cell-cell adhesion. Regulates cell-surface E-cadherin expression and potentiates mechanosensing by the E-cadherin complex. May also play important roles in cell morphology and locomotion. This is Vinculin (Vcl) from Mus musculus (Mouse).